Here is a 457-residue protein sequence, read N- to C-terminus: MTDSFAHCASHINYRHKMKTMFIFSTPCCSPSTAFFSPFRASNSKPLRSTLSLRSSISSSSITSTSHCSLAFNIVKHKEKNVVSANMTSSVSSRTFLNAQNEQDVLSGIKKEVEAGTLPASIAAGMEEVYLNYKSAVIKSGDPKANEIVLSNMTALLDRIFLDVKEPFVFEAHHKAKREPFDYYMFGQNYIRPLVDFETSYVGNMPLFIQMEEQLKQGHNIILMSNHQSEADPAIIALLLEMRLPHIAENLIYVAGDRVITVPLCKPFSIGRNLICVYSKKHMLDNPELVDMKRKANTRSRKEMAMLLRSGSQIIWIAPSGGRDRPVANSGEWAPAPFDSSSVDNMRRLVDHSGPPGHIYPLAILCHDIMPPPLKVEKEIGEKRIISYHGTGISTAPEISFSNTTAACENPEKAKDAYTKALYDSVTEQYDVLKSAIHGKKGLQASTPVVSLSQPWK.

A chloroplast-targeting transit peptide spans 1-88 (MTDSFAHCAS…EKNVVSANMT (88 aa)). Residues 227–232 (HQSEAD) carry the HXXXXD motif motif.

It belongs to the GPAT/DAPAT family. Post-translationally, the N-terminus is blocked.

Its subcellular location is the plastid. The protein resides in the chloroplast stroma. The catalysed reaction is sn-glycerol 3-phosphate + an acyl-CoA = a 1-acyl-sn-glycero-3-phosphate + CoA. It participates in phospholipid metabolism; CDP-diacylglycerol biosynthesis; CDP-diacylglycerol from sn-glycerol 3-phosphate: step 1/3. Its function is as follows. Esterifies acyl-group from acyl-ACP to the sn-1 position of glycerol-3-phosphate. The enzyme from chilling-resistant plants discriminates against non-fluid palmitic acid and selects oleic acid whereas the enzyme from sensitive plants accepts both fatty acids. This is an oleate-selective acyltransferase. This chain is Glycerol-3-phosphate acyltransferase, chloroplastic (GPAT), found in Pisum sativum (Garden pea).